We begin with the raw amino-acid sequence, 822 residues long: ATP-dependent zinc metalloprotease FTSH 8, mitochondrial (822 aa).

Residues 1–25 are compositionally biased toward low complexity; that stretch reads MSLASLARALSRRSAPSSSRARQGF. Disordered regions lie at residues 1-50, 103-131, and 202-221; these read MSLA…LHGG, NYYPKGKKEAPKGDGSNKSDSKQDSSTDD, and SSPQSNSQGQNTDAIITTND. A mitochondrion-targeting transit peptide spans 1 to 93; the sequence is MSLASLARAL…LANPQFRRLF (93 aa). Residues 108–127 are compositionally biased toward basic and acidic residues; sequence GKKEAPKGDGSNKSDSKQDS. 375–382 contributes to the ATP binding site; sequence GPPGTGKT. His-600 serves as a coordination point for Zn(2+). Residue Glu-601 is part of the active site. Zn(2+)-binding residues include His-604 and Asp-676. Positions 781 to 822 are disordered; that stretch reads PTNYDLFKQGFQDEEDSKNQEAAKTPQPDDDGTPSLGEVVPT.

In the N-terminal section; belongs to the AAA ATPase family. It in the C-terminal section; belongs to the peptidase M41 family. The cofactor is Zn(2+).

The protein localises to the mitochondrion. In terms of biological role, probable ATP-dependent zinc metallopeptidase. This is ATP-dependent zinc metalloprotease FTSH 8, mitochondrial (FTSH8) from Oryza sativa subsp. japonica (Rice).